The following is a 77-amino-acid chain: Conotoxin VnMKLT1-012 (77 aa).

Residues 1–22 form the signal peptide; sequence MKLTCMMIVAVLFLTAWTFVTA. Residues 23-48 constitute a propeptide that is removed on maturation; it reads DDSRNGLDYLFPKARHEMNPKASRDI. 3 disulfides stabilise this stretch: cysteine 51–cysteine 68, cysteine 58–cysteine 72, and cysteine 67–cysteine 76.

This sequence belongs to the conotoxin O1 superfamily. Expressed by the venom duct.

The protein resides in the secreted. In Conus ventricosus (Mediterranean cone), this protein is Conotoxin VnMKLT1-012.